Consider the following 156-residue polypeptide: uncharacterized protein (156 aa).

It belongs to the mimivirus L223/L227/L812 family.

This is an uncharacterized protein from Acanthamoeba polyphaga mimivirus (APMV).